Reading from the N-terminus, the 689-residue chain is MNFENLLIELGTEELPPKSLRKLAESFLANFTEELTKADLAFSSAVWYAAPRRLAIKVTELALAQADKVVEKRGPAVSSAFDAEGKPTKAAEGWARGNGITVEQAERLVTDKGEWLVHNAKVEGVETKSLIAAMAQRALDKLPIPKPMRWGNNKTQFIRPVHTATMLLGSELIEGELLGIKSARTVRGHRFMGLKQFELAHADHYLADLKEKGKVIADYESRKALIKADAEKAAAKIGGTADIEDSLLEEVASLVEWPVVLTASFEEKFLAVPSEALVYTMKGDQKYFPVFDDAGKLLPNFIFVTNIESKDPAQIISGNEKVVRPRLADAEFFFNTDKKHTLESRLPSLETVLFQQQLGTLKDKVNRISALAAFIAEQTGANAVDAARAGLLSKTDLMTNMVMEFTDTQGTMGMHYARLDGETEAVAVAMEEQYKPKFSGDTVPSAGVSCAVALADKLDTLVGIFGIGQAPKGAADPFALRRAAIGVLRIIVENKLPLDLVTLIAKAQELHGTNLSNANAAEEVLEFLMARFRAWYQDKGIGVDVILAVLARRPTRPADFDSRINAVSHFRSLEASSALAAANKRVSNILAKVEGALPTTINASLLTEAAEQALAAKLNELQPQLAPLFANADYQQALTLLAGLRESVDQFFEDVMVMADDEALKNNRLALLNNLREQFLHVADISLLQ.

Belongs to the class-II aminoacyl-tRNA synthetase family. Tetramer of two alpha and two beta subunits.

The protein localises to the cytoplasm. The catalysed reaction is tRNA(Gly) + glycine + ATP = glycyl-tRNA(Gly) + AMP + diphosphate. The polypeptide is Glycine--tRNA ligase beta subunit (Shewanella baltica (strain OS195)).